Consider the following 64-residue polypeptide: Chromatin protein Cren7 (64 aa).

The protein belongs to the Cren7 family. As to quaternary structure, monomer. Methylated at multiple sites, to varying extents.

It localises to the chromosome. It is found in the cytoplasm. A chromatin protein, binds double-stranded DNA without sequence specificity. Constrains negative DNA supercoils. The chain is Chromatin protein Cren7 from Aeropyrum pernix (strain ATCC 700893 / DSM 11879 / JCM 9820 / NBRC 100138 / K1).